The sequence spans 149 residues: uncharacterized protein (149 aa).

The HotDog ACOT-type domain occupies 16–128 (PAGEPAIRVI…LFTFVAIDED (113 aa)).

The protein belongs to the acyl coenzyme A hydrolase family.

This is an uncharacterized protein from Zymomonas mobilis subsp. mobilis (strain ATCC 31821 / ZM4 / CP4).